The following is a 61-amino-acid chain: Small ribosomal subunit protein uS14 (61 aa).

Zn(2+)-binding residues include Cys-24, Cys-27, Cys-40, and Cys-43.

It belongs to the universal ribosomal protein uS14 family. Zinc-binding uS14 subfamily. In terms of assembly, part of the 30S ribosomal subunit. Contacts proteins S3 and S10. Requires Zn(2+) as cofactor.

Its function is as follows. Binds 16S rRNA, required for the assembly of 30S particles and may also be responsible for determining the conformation of the 16S rRNA at the A site. The chain is Small ribosomal subunit protein uS14 from Streptococcus pyogenes serotype M49 (strain NZ131).